A 163-amino-acid chain; its full sequence is K88 minor fimbrial subunit FaeF (163 aa).

A signal peptide spans 1 to 22 (MKKTMMAAALVLSALSIQSALA).

The protein resides in the fimbrium. Functionally, K88 minor fimbrial subunit, plays an essential role in the biogenesis of the K88 fimbriae. required at some step in the initiation and/or elongation of the K88 fimbriae. In Escherichia coli, this protein is K88 minor fimbrial subunit FaeF (faeF).